Here is an 812-residue protein sequence, read N- to C-terminus: Valine--tRNA ligase (812 aa).

A 'HIGH' region motif is present at residues 47–57; sequence PTISGQLHIGH. Residues 536-540 carry the 'KMSKS' region motif; the sequence is KMSKS. Residue Lys539 coordinates ATP.

Belongs to the class-I aminoacyl-tRNA synthetase family. ValS type 2 subfamily. Monomer.

It localises to the cytoplasm. The enzyme catalyses tRNA(Val) + L-valine + ATP = L-valyl-tRNA(Val) + AMP + diphosphate. Its function is as follows. Catalyzes the attachment of valine to tRNA(Val). As ValRS can inadvertently accommodate and process structurally similar amino acids such as threonine, to avoid such errors, it has a 'posttransfer' editing activity that hydrolyzes mischarged Thr-tRNA(Val) in a tRNA-dependent manner. In Ehrlichia ruminantium (strain Gardel), this protein is Valine--tRNA ligase.